Here is a 396-residue protein sequence, read N- to C-terminus: Ribosomal RNA large subunit methyltransferase I (396 aa).

The PUA domain maps to 2–81 (SVRLVLAKGR…ESIDIAFFSR (80 aa)).

It belongs to the methyltransferase superfamily. RlmI family.

The protein resides in the cytoplasm. The enzyme catalyses cytidine(1962) in 23S rRNA + S-adenosyl-L-methionine = 5-methylcytidine(1962) in 23S rRNA + S-adenosyl-L-homocysteine + H(+). In terms of biological role, specifically methylates the cytosine at position 1962 (m5C1962) of 23S rRNA. This is Ribosomal RNA large subunit methyltransferase I from Escherichia coli (strain K12 / MC4100 / BW2952).